A 484-amino-acid chain; its full sequence is Aspartyl/glutamyl-tRNA(Asn/Gln) amidotransferase subunit B (484 aa).

It belongs to the GatB/GatE family. GatB subfamily. Heterotrimer of A, B and C subunits.

It catalyses the reaction L-glutamyl-tRNA(Gln) + L-glutamine + ATP + H2O = L-glutaminyl-tRNA(Gln) + L-glutamate + ADP + phosphate + H(+). It carries out the reaction L-aspartyl-tRNA(Asn) + L-glutamine + ATP + H2O = L-asparaginyl-tRNA(Asn) + L-glutamate + ADP + phosphate + 2 H(+). Allows the formation of correctly charged Asn-tRNA(Asn) or Gln-tRNA(Gln) through the transamidation of misacylated Asp-tRNA(Asn) or Glu-tRNA(Gln) in organisms which lack either or both of asparaginyl-tRNA or glutaminyl-tRNA synthetases. The reaction takes place in the presence of glutamine and ATP through an activated phospho-Asp-tRNA(Asn) or phospho-Glu-tRNA(Gln). In Bordetella bronchiseptica (strain ATCC BAA-588 / NCTC 13252 / RB50) (Alcaligenes bronchisepticus), this protein is Aspartyl/glutamyl-tRNA(Asn/Gln) amidotransferase subunit B.